The following is a 239-amino-acid chain: MMKLKFYLVYLWYKVLLKLGIKTDEIYYIGGSEALPPPLTKEEEEVLLNKLPKGDQAARSLLIERNLRLVVYIARKFENTGINIEDLISIGTIGLIKAVNTFNPEKKIKLATYASRCIENEILMHLRRNNKNRSEVSFDEPLNIDWDGNELLLSDVLGTDDDIITKDLEATVDRHLLMKALHQLNDREKQIMELRFGLAGGEEKTQKDVADMLGISQSYISRLEKRIIKRLRKEFNKMV.

The propeptide occupies 1 to 27; sequence MMKLKFYLVYLWYKVLLKLGIKTDEIY. Residues 86–99 carry the Polymerase core binding motif; it reads DLISIGTIGLIKAV. Positions 206–225 form a DNA-binding region, H-T-H motif; it reads QKDVADMLGISQSYISRLEK.

Belongs to the sigma-70 factor family. In terms of processing, proteolytically cleaved in the N-terminus probably by a SpoIIGA homolog to yield the active peptide.

Sigma factors are initiation factors that promote the attachment of RNA polymerase to specific initiation sites and are then released. This sigma factor directs the transcription of crystal protein genes, a sporulation-regulated event. The sequence is that of RNA polymerase sigma-35 factor (sigE) from Bacillus anthracis.